Reading from the N-terminus, the 142-residue chain is Cystatin-8 (142 aa).

Positions 1–19 are cleaved as a signal peptide; sequence MAKPLWLSLILFIIPVALA. A glycan (N-linked (GlcNAc...) asparagine) is linked at N39. Residues 77–81 carry the Secondary area of contact motif; it reads QITDR. Cystine bridges form between C95/C105 and C119/C139. Residue N100 is glycosylated (N-linked (GlcNAc...) asparagine).

This sequence belongs to the cystatin family. As to expression, proximal caput region of the epididymis. Lower expression in the testis. Within the testis it is localized to the elongating spermatids, whereas within the epididymis it is exclusively synthesized by the proximal caput epithelium.

The protein localises to the secreted. Its function is as follows. Performs a specialized role during sperm development and maturation. This chain is Cystatin-8 (Cst8), found in Mus musculus (Mouse).